A 552-amino-acid polypeptide reads, in one-letter code: CTP synthase (552 aa).

Residues 1 to 270 (MTKFVFVTGG…DGLICDKLRL (270 aa)) are amidoligase domain. Ser-13 serves as a coordination point for CTP. Position 13 (Ser-13) interacts with UTP. ATP contacts are provided by residues 14-19 (SLGKGI) and Asp-71. Mg(2+) is bound by residues Asp-71 and Glu-144. CTP-binding positions include 151-153 (DIE), 191-196 (KTKPTQ), and Lys-227. UTP-binding positions include 191–196 (KTKPTQ) and Lys-227. Positions 295-548 (QIAMVGKYVE…IKAAVEHQKP (254 aa)) constitute a Glutamine amidotransferase type-1 domain. Residue Gly-357 coordinates L-glutamine. The active-site Nucleophile; for glutamine hydrolysis is Cys-384. L-glutamine contacts are provided by residues 385–388 (LGMQ), Glu-408, and Arg-474. Active-site residues include His-521 and Glu-523.

Belongs to the CTP synthase family. Homotetramer.

It carries out the reaction UTP + L-glutamine + ATP + H2O = CTP + L-glutamate + ADP + phosphate + 2 H(+). The catalysed reaction is L-glutamine + H2O = L-glutamate + NH4(+). It catalyses the reaction UTP + NH4(+) + ATP = CTP + ADP + phosphate + 2 H(+). The protein operates within pyrimidine metabolism; CTP biosynthesis via de novo pathway; CTP from UDP: step 2/2. With respect to regulation, allosterically activated by GTP, when glutamine is the substrate; GTP has no effect on the reaction when ammonia is the substrate. The allosteric effector GTP functions by stabilizing the protein conformation that binds the tetrahedral intermediate(s) formed during glutamine hydrolysis. Inhibited by the product CTP, via allosteric rather than competitive inhibition. In terms of biological role, catalyzes the ATP-dependent amination of UTP to CTP with either L-glutamine or ammonia as the source of nitrogen. Regulates intracellular CTP levels through interactions with the four ribonucleotide triphosphates. The chain is CTP synthase from Acidovorax ebreus (strain TPSY) (Diaphorobacter sp. (strain TPSY)).